Here is a 221-residue protein sequence, read N- to C-terminus: Deoxyribose-phosphate aldolase (221 aa).

Asp-91 serves as the catalytic Proton donor/acceptor. Lys-153 serves as the catalytic Schiff-base intermediate with acetaldehyde. The active-site Proton donor/acceptor is Lys-182.

This sequence belongs to the DeoC/FbaB aldolase family. DeoC type 1 subfamily.

The protein resides in the cytoplasm. It carries out the reaction 2-deoxy-D-ribose 5-phosphate = D-glyceraldehyde 3-phosphate + acetaldehyde. It participates in carbohydrate degradation; 2-deoxy-D-ribose 1-phosphate degradation; D-glyceraldehyde 3-phosphate and acetaldehyde from 2-deoxy-alpha-D-ribose 1-phosphate: step 2/2. Functionally, catalyzes a reversible aldol reaction between acetaldehyde and D-glyceraldehyde 3-phosphate to generate 2-deoxy-D-ribose 5-phosphate. In Clostridium botulinum (strain Eklund 17B / Type B), this protein is Deoxyribose-phosphate aldolase.